We begin with the raw amino-acid sequence, 392 residues long: Probable tRNA sulfurtransferase (392 aa).

The THUMP domain occupies 59–167 (ADITDRVKKV…DQAFVFSNKI (109 aa)). Residues 184-185 (LL), 209-210 (HF), Arg-266, Gly-288, and Gln-297 each bind ATP.

This sequence belongs to the ThiI family.

It localises to the cytoplasm. The catalysed reaction is [ThiI sulfur-carrier protein]-S-sulfanyl-L-cysteine + a uridine in tRNA + 2 reduced [2Fe-2S]-[ferredoxin] + ATP + H(+) = [ThiI sulfur-carrier protein]-L-cysteine + a 4-thiouridine in tRNA + 2 oxidized [2Fe-2S]-[ferredoxin] + AMP + diphosphate. The enzyme catalyses [ThiS sulfur-carrier protein]-C-terminal Gly-Gly-AMP + S-sulfanyl-L-cysteinyl-[cysteine desulfurase] + AH2 = [ThiS sulfur-carrier protein]-C-terminal-Gly-aminoethanethioate + L-cysteinyl-[cysteine desulfurase] + A + AMP + 2 H(+). Its pathway is cofactor biosynthesis; thiamine diphosphate biosynthesis. Catalyzes the ATP-dependent transfer of a sulfur to tRNA to produce 4-thiouridine in position 8 of tRNAs, which functions as a near-UV photosensor. Also catalyzes the transfer of sulfur to the sulfur carrier protein ThiS, forming ThiS-thiocarboxylate. This is a step in the synthesis of thiazole, in the thiamine biosynthesis pathway. The sulfur is donated as persulfide by IscS. This is Probable tRNA sulfurtransferase from Alkaliphilus oremlandii (strain OhILAs) (Clostridium oremlandii (strain OhILAs)).